The primary structure comprises 76 residues: Alpha/kappa-conotoxin-like pl14.1 (76 aa).

Residues 1 to 27 form the signal peptide; that stretch reads MPSVRSVTCCCLLWMMLSVQLVTPGSP. Residues 28 to 39 constitute a propeptide that is removed on maturation; it reads ATAQLSGQRTAR. 2 disulfide bridges follow: Cys46/Cys61 and Cys50/Cys63. Asn64 carries the post-translational modification Asparagine amide. A propeptide spanning residues 65–76 is cleaved from the precursor; that stretch reads GKRDVVSSSMAV.

It belongs to the conotoxin J superfamily. As to expression, expressed by the venom duct.

It localises to the secreted. In terms of biological role, highly inhibits both nicotinic acetylcholine receptors (neuronal (alpha-3/beta-4) and muscular (alpha-1/beta-1/epsilon/delta) subtypes) and the voltage-gated potassium channel Kv1.6/KCNA6 subtype. This Conus planorbis (Planorbis cone) protein is Alpha/kappa-conotoxin-like pl14.1.